The chain runs to 185 residues: Elongation factor P (185 aa).

Belongs to the elongation factor P family.

It is found in the cytoplasm. Its pathway is protein biosynthesis; polypeptide chain elongation. Functionally, involved in peptide bond synthesis. Stimulates efficient translation and peptide-bond synthesis on native or reconstituted 70S ribosomes in vitro. Probably functions indirectly by altering the affinity of the ribosome for aminoacyl-tRNA, thus increasing their reactivity as acceptors for peptidyl transferase. This chain is Elongation factor P, found in Staphylococcus epidermidis (strain ATCC 35984 / DSM 28319 / BCRC 17069 / CCUG 31568 / BM 3577 / RP62A).